A 314-amino-acid chain; its full sequence is SERTA domain-containing protein 2 (314 aa).

Residues 33-80 (YTLQRQTIFNISLMKLYNHRPLTEPSLQKTVLINNMLRRIQEELKQEG) form the SERTA domain. 2 disordered regions span residues 77-119 (KQEG…HPCD) and 181-222 (PTST…SKLM). Residues 87–97 (TPSSQPTTEPS) are compositionally biased toward polar residues. Over residues 182–193 (TSTSTEAATAAT) the composition is skewed to low complexity. Positions 210 to 221 (GPQESRADDSKL) are enriched in basic and acidic residues. The tract at residues 235–311 (TGFLTDLTLD…TELDHIMEVL (77 aa)) is required for transactivation activity. The Nuclear export signal (NES) motif lies at 238–243 (LTDLTL).

In terms of assembly, interacts with XPO1; which mediates nuclear export. Interacts with TFDP1; modulates transactivation activity of TFDP1/E2F complexes. Polyubiquitinated, which promotes proteasomal degradation. Expressed in adipose tissue.

The protein localises to the nucleus. It localises to the cytoplasm. In terms of biological role, acts at E2F-responsive promoters as coregulator to integrate signals provided by PHD- and/or bromodomain-containing transcription factors. May act as coactivator as well as corepressor of E2F1-TFDP1 and E2F4-TFDP1 complexes on E2F consensus binding sites, which would activate or inhibit E2F-target genes expression. Modulates fat storage by down-regulating the expression of key genes involved in adipocyte lipolysis, thermogenesis and oxidative metabolism. This chain is SERTA domain-containing protein 2 (SERTAD2), found in Homo sapiens (Human).